Reading from the N-terminus, the 383-residue chain is Non-structural maintenance of chromosomes element 4 homolog B (383 aa).

Positions 1–22 are enriched in basic and acidic residues; that stretch reads MRNSVKWETELTGDRSRRREAD. 3 disordered regions span residues 1-59, 198-231, and 355-383; these read MRNS…EQGI, MKQR…EKKS, and QGSV…NGGL. The segment covering 201–212 has biased composition (basic residues); the sequence is RKSRVGNRKRTK. Polar residues predominate over residues 355-372; that stretch reads QGSVIQEETVVEDSSNME.

This sequence belongs to the NSE4 family. In terms of assembly, interacts with SMC5, SMC6A or SMC6B. The SMC5-SMC6 complex is composed of the SMC5 and SMC6 heterodimer attached via their hinge domain and from the non-SMC subunit NSE4A or NSE4B. In terms of tissue distribution, not expressed in seedlings, rosette leaves and floral buds.

Its subcellular location is the nucleus. In terms of biological role, component of the SMC5-SMC6 complex, that promotes sister chromatid alignment after DNA damage and facilitates double-stranded DNA breaks (DSBs) repair via homologous recombination between sister chromatids. This chain is Non-structural maintenance of chromosomes element 4 homolog B (NSE4B), found in Arabidopsis thaliana (Mouse-ear cress).